Consider the following 140-residue polypeptide: ATP synthase epsilon chain (140 aa).

The protein belongs to the ATPase epsilon chain family. In terms of assembly, F-type ATPases have 2 components, CF(1) - the catalytic core - and CF(0) - the membrane proton channel. CF(1) has five subunits: alpha(3), beta(3), gamma(1), delta(1), epsilon(1). CF(0) has three main subunits: a, b and c.

It localises to the cell inner membrane. Produces ATP from ADP in the presence of a proton gradient across the membrane. In Legionella pneumophila (strain Lens), this protein is ATP synthase epsilon chain.